The primary structure comprises 181 residues: MSGAEDNKSSHAQLSSQIFLDLVDSVIADVASECHRVARLGLDRDLDIVEEELRLSVEARAKIADPSNNLETNTKYVVDIFGQTHPPVASEVFNCMNCGRQIVAGRFAPHLEKCMGKGRKARAKTTRSTTAAQNRNARRSPNPRYSPYPNSASENQLASGSPGVAGEDCSNFTVRENVKGD.

An SGF11-type zinc finger spans residues 93 to 114; sequence FNCMNCGRQIVAGRFAPHLEKC. Positions 116–125 are enriched in basic residues; it reads GKGRKARAKT. Positions 116-181 are disordered; the sequence is GKGRKARAKT…FTVRENVKGD (66 aa). A compositionally biased stretch (low complexity) spans 126-153; the sequence is TRSTTAAQNRNARRSPNPRYSPYPNSAS.

Belongs to the SGF11 family. As to quaternary structure, component of a deubiquitination module (DUB module) formed by ENY2, SGF11, and UBP22 in Arabidopsis. Interacts directly with ENY2 and UBP22. Interacts with DDA1. Post-translationally, ubiquitinated in DET1-dependent manner. Ubiquitination probably leads to its subsequent proteasomal degradation.

Its subcellular location is the nucleus. It is found in the nucleoplasm. Component of a deubiquitination module (DUB module) that specifically deubiquinates monoubiquinated histone H2B (H2Bub). Does not seem to be a component of the TREX-2 complex. Seems to act independently of the SAGA multiprotein complex. The DUB module is responsible for the major H2Bub deubiquitinase activity in Arabidopsis. This chain is SAGA-associated factor 11, found in Arabidopsis thaliana (Mouse-ear cress).